Here is a 338-residue protein sequence, read N- to C-terminus: Phosphate acyltransferase (338 aa).

The protein belongs to the PlsX family. Homodimer. Probably interacts with PlsY.

It is found in the cytoplasm. The enzyme catalyses a fatty acyl-[ACP] + phosphate = an acyl phosphate + holo-[ACP]. Its pathway is lipid metabolism; phospholipid metabolism. Its function is as follows. Catalyzes the reversible formation of acyl-phosphate (acyl-PO(4)) from acyl-[acyl-carrier-protein] (acyl-ACP). This enzyme utilizes acyl-ACP as fatty acyl donor, but not acyl-CoA. In Alcanivorax borkumensis (strain ATCC 700651 / DSM 11573 / NCIMB 13689 / SK2), this protein is Phosphate acyltransferase.